Reading from the N-terminus, the 128-residue chain is Large ribosomal subunit protein bL17 (128 aa).

This sequence belongs to the bacterial ribosomal protein bL17 family. In terms of assembly, part of the 50S ribosomal subunit. Contacts protein L32.

This is Large ribosomal subunit protein bL17 from Glaesserella parasuis serovar 5 (strain SH0165) (Haemophilus parasuis).